Reading from the N-terminus, the 271-residue chain is 4-hydroxy-tetrahydrodipicolinate reductase (271 aa).

NAD(+)-binding positions include 11–16 (GAAGRM), glutamate 37, 102–104 (GTT), and 126–129 (AGNM). Catalysis depends on histidine 159, which acts as the Proton donor/acceptor. A (S)-2,3,4,5-tetrahydrodipicolinate-binding site is contributed by histidine 160. The active-site Proton donor is lysine 163. Residue 169–170 (GT) coordinates (S)-2,3,4,5-tetrahydrodipicolinate.

This sequence belongs to the DapB family.

The protein localises to the cytoplasm. The enzyme catalyses (S)-2,3,4,5-tetrahydrodipicolinate + NAD(+) + H2O = (2S,4S)-4-hydroxy-2,3,4,5-tetrahydrodipicolinate + NADH + H(+). The catalysed reaction is (S)-2,3,4,5-tetrahydrodipicolinate + NADP(+) + H2O = (2S,4S)-4-hydroxy-2,3,4,5-tetrahydrodipicolinate + NADPH + H(+). It participates in amino-acid biosynthesis; L-lysine biosynthesis via DAP pathway; (S)-tetrahydrodipicolinate from L-aspartate: step 4/4. Catalyzes the conversion of 4-hydroxy-tetrahydrodipicolinate (HTPA) to tetrahydrodipicolinate. This chain is 4-hydroxy-tetrahydrodipicolinate reductase, found in Parvibaculum lavamentivorans (strain DS-1 / DSM 13023 / NCIMB 13966).